The primary structure comprises 143 residues: FAD synthase (143 aa).

Residues 13–14 (TF), 18–21 (HPGH), and Asp-96 contribute to the ATP site.

The protein belongs to the archaeal FAD synthase family. In terms of assembly, homodimer. Requires a divalent metal cation as cofactor.

The enzyme catalyses FMN + ATP + H(+) = FAD + diphosphate. It functions in the pathway cofactor biosynthesis; FAD biosynthesis; FAD from FMN: step 1/1. Catalyzes the transfer of the AMP portion of ATP to flavin mononucleotide (FMN) to produce flavin adenine dinucleotide (FAD) coenzyme. The chain is FAD synthase from Methanothrix thermoacetophila (strain DSM 6194 / JCM 14653 / NBRC 101360 / PT) (Methanosaeta thermophila).